Consider the following 348-residue polypeptide: Phosphoribosylformylglycinamidine cyclo-ligase (348 aa).

It belongs to the AIR synthase family.

Its subcellular location is the cytoplasm. The enzyme catalyses 2-formamido-N(1)-(5-O-phospho-beta-D-ribosyl)acetamidine + ATP = 5-amino-1-(5-phospho-beta-D-ribosyl)imidazole + ADP + phosphate + H(+). It participates in purine metabolism; IMP biosynthesis via de novo pathway; 5-amino-1-(5-phospho-D-ribosyl)imidazole from N(2)-formyl-N(1)-(5-phospho-D-ribosyl)glycinamide: step 2/2. This chain is Phosphoribosylformylglycinamidine cyclo-ligase, found in Roseobacter denitrificans (strain ATCC 33942 / OCh 114) (Erythrobacter sp. (strain OCh 114)).